Here is a 2372-residue protein sequence, read N- to C-terminus: Nonribosomal peptide synthase roqA (2372 aa).

The segment at 217–610 (EHCRSQPDAE…VGRKDREVKI (394 aa)) is adenylation 1. Residues 723 to 745 (AASSHSSTREQPSNQRDKEDVEL) form a disordered region. Positions 725 to 736 (SSHSSTREQPSN) are enriched in polar residues. The region spanning 750–823 (SAKENTLCSV…KIARCTAESK (74 aa)) is the Carrier 1 domain. S784 is subject to O-(pantetheine 4'-phosphoryl)serine. Residues 856–1122 (EDIYPCTPLQ…FATFPFRTQL (267 aa)) are condensation 1. An adenylation 2 region spans residues 1290–1679 (QPNSEAVCAW…VGRKDTQVKL (390 aa)). The Carrier 2 domain occupies 1819–1895 (KPTTEQERFV…LFCKHVILIQ (77 aa)). S1856 carries the O-(pantetheine 4'-phosphoryl)serine modification. Positions 1962-2227 (TSNYTSTAIF…FNVLPCRIAI (266 aa)) are condensation 2.

Its pathway is alkaloid biosynthesis. Dipeptide synthase; part of the gene cluster that mediates the biosynthesis of the mycotoxins roquefortine C and meleagrin. The first stage is catalyzed by the dipeptide synthase roqA which condenses histidine and tryptophan to produce histidyltryptophanyldiketopiperazine (HTD). HTD is then converted to roquefortine C through two possible pathways. In the first pathway, prenyltransferase roqD transforms HTD to the intermediate roquefortine D, which is in turn converted to roquefortine C by the cytochrome P450 monooxygenase roqR. In the second pathway, HTD is first converted to the intermediate dehydrohistidyltryptophanyldi-ketopiperazine (DHTD) by roqR which is then prenylated by roqD to form roquefortine C. Roquefortine C can be further transformed to meleagrin via three more reactions including oxydation to glandicolin A by roqM, which is further reduced to glandicoline B by roqO. Finally, glandicoline B is converted to meleagrin by the glandicoline B O-methyltransferase roqN. More studies identified further branching and additional metabolites produced by the roquefortine/meleagrin cluster, including roquefortine F, roquefortine L, roquefortine M, roquefortine N and neoxaline. The chain is Nonribosomal peptide synthase roqA from Penicillium rubens (strain ATCC 28089 / DSM 1075 / NRRL 1951 / Wisconsin 54-1255) (Penicillium chrysogenum).